The primary structure comprises 323 residues: Leucine-rich repeat-containing protein 46 (323 aa).

4 LRR repeats span residues 49–70 (ELETVRLDGEGITCIGNLEKLR), 71–92 (NIHSLYLQSNKIQRIENLACIT), 93–114 (SLRFLSLARNQIRHVENLLDLQ), and 115–135 (YLQFLDLSENLIETLKLDELP). Residues 146–188 (NPCTNQEGYRKMVIGALPLLLDLDKQPILERWTSDEEDKSSDD) form the LRRCT domain. T178 is subject to Phosphothreonine. 3 positions are modified to phosphoserine: S179, S185, and S186. Residues 203–228 (RGFFKDLEQELHQHQERRQQAALTEH) are a coiled coil. The disordered stretch occupies residues 249-323 (MAGDCSSTAT…TKMTNKKSTK (75 aa)). The span at 267–316 (PKATSSTQTASTTKKQVSKNQKSSVQARKGALAATTSKTSQAATPSMTKM) shows a compositional bias: low complexity. S303 bears the Phosphoserine mark.

In terms of tissue distribution, testis-specific (at protein level).

It localises to the cell projection. The protein localises to the cilium. The protein resides in the flagellum. In terms of biological role, required for normal spermatogenesis and male fertility. Plays an important role in sperm flagellum biogenesis. This chain is Leucine-rich repeat-containing protein 46 (Lrrc46), found in Mus musculus (Mouse).